The primary structure comprises 202 residues: Probable GTP-binding protein EngB (202 aa).

In terms of domain architecture, EngB-type G spans 30–201 (NILQIALAGR…WERIQYTIDS (172 aa)). Residues 38–45 (GRSNVGKS), 65–69 (GKTRS), 84–87 (DLPG), 151–154 (TKID), and 180–182 (VSS) each bind GTP. Mg(2+)-binding residues include S45 and T67.

This sequence belongs to the TRAFAC class TrmE-Era-EngA-EngB-Septin-like GTPase superfamily. EngB GTPase family. Requires Mg(2+) as cofactor.

In terms of biological role, necessary for normal cell division and for the maintenance of normal septation. This chain is Probable GTP-binding protein EngB, found in Lawsonia intracellularis (strain PHE/MN1-00).